We begin with the raw amino-acid sequence, 21 residues long: Hemocyanin subunit 6 (21 aa).

The protein belongs to the tyrosinase family. Hemocyanin subfamily. As to expression, hemolymph.

Its subcellular location is the secreted. It is found in the extracellular space. In terms of biological role, hemocyanins are copper-containing oxygen carriers occurring freely dissolved in the hemolymph of many mollusks and arthropods. The polypeptide is Hemocyanin subunit 6 (Maja squinado (Mediterranean spider crab)).